The sequence spans 186 residues: Large ribosomal subunit protein uL22 (186 aa).

The tract at residues 161 to 186 (VDDEPAKKKLSKKKLQRQKEKMLRSE) is disordered. Basic and acidic residues predominate over residues 177–186 (RQKEKMLRSE).

The protein belongs to the universal ribosomal protein uL22 family.

The sequence is that of Large ribosomal subunit protein uL22 (RpL17) from Drosophila pseudoobscura pseudoobscura (Fruit fly).